The chain runs to 153 residues: Large ribosomal subunit protein uL30 (153 aa).

This sequence belongs to the universal ribosomal protein uL30 family. In terms of assembly, part of the 50S ribosomal subunit.

The protein is Large ribosomal subunit protein uL30 of Methanosarcina barkeri (strain Fusaro / DSM 804).